The sequence spans 490 residues: MVPVVALVGRPNVGKSTLFNRLTRTRDALVADFPGLTRDRKYGRAEIEGREFICIDTGGIDGTEDGVETRMAEQSLLAIEEADVVLFMVDARAGLMPADEAIAKHLRSREKPTFLVVNKTDGLDPDQAVVDFYSLGLGEIYPIAASHGRGVLSLLEHVLLPWMEDLAPQEEVDEDAEYWAQFEAEENGEEEEEDDFDPQSLPIKLAIVGRPNVGKSTLTNRILGEERVVVYDMPGTTRDSIYIPMERDGREYVLIDTAGVRKRGKITDAVEKFSVIKTLQAIEDANVVMLVIDAREGISDQDLSLLGFILNSGRSLVIVVNKWDGLSQEVKEQVKETLDFRLGFIDFARVHFISALHGSGVGNLFESVREAYDSSTRRVGTSMLTRIMTMAVEDHQPPLVRGRRVKLKYAHAGGYNPPIVVIHGNQVKDLPDSYKRYLMNYFRKSLDVMGSPIRIQFKEGENPYANKRNTLTPTQMRKRKRLMKHIKKNK.

2 consecutive EngA-type G domains span residues 3-166 (PVVA…MEDL) and 203-376 (IKLA…DSST). GTP-binding positions include 9 to 16 (GRPNVGKS), 56 to 60 (DTGGI), 118 to 121 (NKTD), 209 to 216 (GRPNVGKS), 256 to 260 (DTAGV), and 321 to 324 (NKWD). The region spanning 377–461 (RRVGTSMLTR…PIRIQFKEGE (85 aa)) is the KH-like domain.

The protein belongs to the TRAFAC class TrmE-Era-EngA-EngB-Septin-like GTPase superfamily. EngA (Der) GTPase family. Associates with the 50S ribosomal subunit.

In terms of biological role, GTPase that plays an essential role in the late steps of ribosome biogenesis. The protein is GTPase Der of Shigella flexneri serotype 5b (strain 8401).